The sequence spans 135 residues: D-ribose pyranase (135 aa).

His20 functions as the Proton donor in the catalytic mechanism. Substrate-binding positions include Asp28, His102, and 124–126 (YSN).

The protein belongs to the RbsD / FucU family. RbsD subfamily. Homodecamer.

Its subcellular location is the cytoplasm. The enzyme catalyses beta-D-ribopyranose = beta-D-ribofuranose. It functions in the pathway carbohydrate metabolism; D-ribose degradation; D-ribose 5-phosphate from beta-D-ribopyranose: step 1/2. Functionally, catalyzes the interconversion of beta-pyran and beta-furan forms of D-ribose. The chain is D-ribose pyranase from Thermotoga maritima (strain ATCC 43589 / DSM 3109 / JCM 10099 / NBRC 100826 / MSB8).